A 292-amino-acid chain; its full sequence is Golgi to ER traffic protein 2 (292 aa).

Over residues 1–18 (MSELSAEEKRKLLRERRQ) the composition is skewed to basic and acidic residues. The tract at residues 1-80 (MSELSAEEKR…TPLHDDPEVP (80 aa)) is disordered. Residues 1-158 (MSELSAEEKR…SQYHAYEQKQ (158 aa)) are Cytoplasmic-facing. 2 stretches are compositionally biased toward polar residues: residues 29-47 (RLNNILSQGSSVKSSNVTS) and 55-71 (ATTTVMDLPSRETQSPT). Residues 159–179 (WKARFLVVRWIIHTLNFVYHY) traverse the membrane as a helical segment. Residues 180–205 (IASGYKLSASPYAFVRAQAVDSHVRT) are Lumenal-facing. The chain crosses the membrane as a helical span at residues 206–225 (FFTAFLTVEVAVISAYFLVM). Over 226–268 (SQPKFKDFSRENLVSRILSMASAVVPAVGRYQPLVTRALVYWN) the chain is Cytoplasmic. Residues 269–289 (GASIFVGDLMLMVFYFGITSV) traverse the membrane as a helical segment. Residues 290 to 292 (LGN) are Lumenal-facing.

The protein belongs to the GET2 family. Component of the Golgi to ER traffic (GET) complex, which is composed of GET1, GET2 and GET3. Within the complex, GET1 and GET2 form a heterotetramer which is stabilized by phosphatidylinositol binding and which binds to the GET3 homodimer.

It localises to the endoplasmic reticulum membrane. The protein localises to the golgi apparatus membrane. Functionally, required for the post-translational delivery of tail-anchored (TA) proteins to the endoplasmic reticulum. Together with GET1, acts as a membrane receptor for soluble GET3, which recognizes and selectively binds the transmembrane domain of TA proteins in the cytosol. The GET complex cooperates with the HDEL receptor ERD2 to mediate the ATP-dependent retrieval of resident ER proteins that contain a C-terminal H-D-E-L retention signal from the Golgi to the ER. The protein is Golgi to ER traffic protein 2 of Clavispora lusitaniae (strain ATCC 42720) (Yeast).